Reading from the N-terminus, the 141-residue chain is Nucleoside diphosphate kinase (141 aa).

ATP is bound by residues K9, F57, R85, T91, R102, and N112. Residue H115 is the Pros-phosphohistidine intermediate of the active site.

This sequence belongs to the NDK family. As to quaternary structure, homotetramer. Mg(2+) serves as cofactor.

Its subcellular location is the cytoplasm. The catalysed reaction is a 2'-deoxyribonucleoside 5'-diphosphate + ATP = a 2'-deoxyribonucleoside 5'-triphosphate + ADP. It carries out the reaction a ribonucleoside 5'-diphosphate + ATP = a ribonucleoside 5'-triphosphate + ADP. Major role in the synthesis of nucleoside triphosphates other than ATP. The ATP gamma phosphate is transferred to the NDP beta phosphate via a ping-pong mechanism, using a phosphorylated active-site intermediate. The polypeptide is Nucleoside diphosphate kinase (Chloroherpeton thalassium (strain ATCC 35110 / GB-78)).